The following is a 377-amino-acid chain: Peroxisomal membrane protein PEX14 (377 aa).

Over residues 1–20 the composition is skewed to low complexity; that stretch reads MASSEQAEQPSQPSSSPGSE. Positions 1 to 23 are disordered; sequence MASSEQAEQPSQPSSSPGSENVV. Alanine 2 bears the N-acetylalanine mark. The Peroxisomal segment spans residues 2–108; the sequence is ASSEQAEQPS…CSPGSSRWRD (107 aa). An N6-acetyllysine modification is found at lysine 34. A helical transmembrane segment spans residues 109–126; the sequence is YGALAIIMAGIAFGFHQL. The Cytoplasmic segment spans residues 127-377; it reads YKKYLLPLIL…EGASNESERH (251 aa). The tract at residues 230 to 377 is disordered; sequence PPSPSAPKIP…EGASNESERH (148 aa). Position 232 is a phosphoserine (serine 232). 2 stretches are compositionally biased toward low complexity: residues 244–259 and 265–275; these read PVKS…VNHH and SPVSNESTSSS. Residues serine 282 and serine 335 each carry the phosphoserine modification. The span at 323 to 342 shows a compositional bias: acidic residues; sequence KEEEEEEEEEDVSHVDEEDV. Basic and acidic residues predominate over residues 360 to 377; it reads QVDKLRRPEGASNESERH.

It belongs to the peroxin-14 family. Interacts with PEX13; forming the PEX13-PEX14 docking complex. Interacts with PEX5 (via WxxxF/Y motifs). Interacts with PEX19. Interacts with tubulin.

It is found in the peroxisome membrane. Functionally, component of the PEX13-PEX14 docking complex, a translocon channel that specifically mediates the import of peroxisomal cargo proteins bound to PEX5 receptor. The PEX13-PEX14 docking complex forms a large import pore which can be opened to a diameter of about 9 nm. Mechanistically, PEX5 receptor along with cargo proteins associates with the PEX14 subunit of the PEX13-PEX14 docking complex in the cytosol, leading to the insertion of the receptor into the organelle membrane with the concomitant translocation of the cargo into the peroxisome matrix. Plays a key role for peroxisome movement through a direct interaction with tubulin. The chain is Peroxisomal membrane protein PEX14 from Cricetulus longicaudatus (Long-tailed dwarf hamster).